A 195-amino-acid chain; its full sequence is PAP fimbrial minor pilin protein (195 aa).

The N-terminal stretch at 1–22 is a signal peptide; that stretch reads MRLRFSVPLFFFGCVFVHGVFA. Residues C58 and C97 are joined by a disulfide bond.

Belongs to the fimbrial protein family.

It is found in the secreted. It localises to the fimbrium. Fimbriae (also called pili), polar filaments radiating from the surface of the bacterium to a length of 0.5-1.5 micrometers and numbering 100-300 per cell, enable bacteria to colonize the epithelium of specific host organs. In terms of biological role, papH seems to anchor the pilus to the bacterial cell. In addition the stoichiometric relationship between PapH and PapA determines the pilus length. In Escherichia coli, this protein is PAP fimbrial minor pilin protein (papH).